Consider the following 1012-residue polypeptide: Putative cellulose synthase-like protein D5 (1012 aa).

Residues 1–85 (MSGDYANYTV…APSSNKSLLV (85 aa)) are disordered. A compositionally biased stretch (low complexity) spans 20-37 (PSGGAPPAAPSAGGARPG). Basic and acidic residues predominate over residues 57 to 69 (GGGDDGAKMDRRL). Helical transmembrane passes span 150-170 (ILSP…LFLV) and 180-200 (ALWL…SWLL). Aspartate 280 is a catalytic residue. The tract at residues 597 to 620 (PRQGSEAMPGAGGGRSGGGSVGGD) is disordered. Residues 606-618 (GAGGGRSGGGSVG) show a composition bias toward gly residues. Residue aspartate 717 is part of the active site. The next 6 membrane-spanning stretches (helical) occupy residues 799-819 (LFLI…QFIV), 825-845 (TFLS…LLEV), 871-891 (LAAV…SFTL), 914-934 (SLFI…VVGV), 948-968 (LLGG…FAKG), and 978-998 (TIVY…WITI).

It belongs to the glycosyltransferase 2 family. Plant cellulose synthase-like D subfamily.

The protein localises to the golgi apparatus membrane. In terms of biological role, thought to be a Golgi-localized beta-glycan synthase that polymerize the backbones of noncellulosic polysaccharides (hemicelluloses) of plant cell wall. This is Putative cellulose synthase-like protein D5 (CSLD5) from Oryza sativa subsp. indica (Rice).